The sequence spans 198 residues: Recombination protein RecR (198 aa).

Residues 57-72 (CSVCGHITENDPCYIC) form a C4-type zinc finger. The 96-residue stretch at 80-175 (SVICVVEDDK…KVTRLAQGLS (96 aa)) folds into the Toprim domain.

The protein belongs to the RecR family.

In terms of biological role, may play a role in DNA repair. It seems to be involved in an RecBC-independent recombinational process of DNA repair. It may act with RecF and RecO. This is Recombination protein RecR from Staphylococcus aureus (strain MRSA252).